A 202-amino-acid polypeptide reads, in one-letter code: ATP-dependent Clp protease proteolytic subunit (202 aa).

The active-site Nucleophile is Ser-98. Residue His-123 is part of the active site.

This sequence belongs to the peptidase S14 family. In terms of assembly, fourteen ClpP subunits assemble into 2 heptameric rings which stack back to back to give a disk-like structure with a central cavity, resembling the structure of eukaryotic proteasomes.

The protein resides in the cytoplasm. It carries out the reaction Hydrolysis of proteins to small peptides in the presence of ATP and magnesium. alpha-casein is the usual test substrate. In the absence of ATP, only oligopeptides shorter than five residues are hydrolyzed (such as succinyl-Leu-Tyr-|-NHMec, and Leu-Tyr-Leu-|-Tyr-Trp, in which cleavage of the -Tyr-|-Leu- and -Tyr-|-Trp bonds also occurs).. Its function is as follows. Cleaves peptides in various proteins in a process that requires ATP hydrolysis. Has a chymotrypsin-like activity. Plays a major role in the degradation of misfolded proteins. The polypeptide is ATP-dependent Clp protease proteolytic subunit (Magnetococcus marinus (strain ATCC BAA-1437 / JCM 17883 / MC-1)).